Here is a 252-residue protein sequence, read N- to C-terminus: MNKFEDIRGVAFDLDGTLVDSAPGLAAAVDMALYALELPVAGEERVITWIGNGADVLMERALTWARQERATLRKTMGKPPVDDDIPAEEQVRILRKLFDRYYGEVAEEGTFLFPHVADTLGALQAKGLPLGLVTNKPTPFVAPLLEALDIAKYFSVVIGGDDVQNKKPHPDPLLLVAERMGIAPQQMLFVGDSRNDIQAAKAAGCPSVGLTYGYNYGEAIDLSQPDVIYQSINDLLPALGLPHSENQESKND.

D13 serves as the catalytic Nucleophile. Mg(2+) contacts are provided by D13, D15, and D192.

This sequence belongs to the HAD-like hydrolase superfamily. CbbY/CbbZ/Gph/YieH family. Monomer. Mg(2+) serves as cofactor. Requires chloride as cofactor.

The catalysed reaction is 2-phosphoglycolate + H2O = glycolate + phosphate. The protein operates within organic acid metabolism; glycolate biosynthesis; glycolate from 2-phosphoglycolate: step 1/1. Its function is as follows. Specifically catalyzes the dephosphorylation of 2-phosphoglycolate. Is involved in the dissimilation of the intracellular 2-phosphoglycolate formed during the DNA repair of 3'-phosphoglycolate ends, a major class of DNA lesions induced by oxidative stress. The protein is Phosphoglycolate phosphatase of Shigella flexneri.